Consider the following 126-residue polypeptide: Aspartate 1-decarboxylase (126 aa).

Ser-25 serves as the catalytic Schiff-base intermediate with substrate; via pyruvic acid. Ser-25 is subject to Pyruvic acid (Ser). Thr-57 is a substrate binding site. The active-site Proton donor is Tyr-58. 73 to 75 (GAA) is a binding site for substrate.

Belongs to the PanD family. In terms of assembly, heterooctamer of four alpha and four beta subunits. The cofactor is pyruvate. Post-translationally, is synthesized initially as an inactive proenzyme, which is activated by self-cleavage at a specific serine bond to produce a beta-subunit with a hydroxyl group at its C-terminus and an alpha-subunit with a pyruvoyl group at its N-terminus.

The protein localises to the cytoplasm. The enzyme catalyses L-aspartate + H(+) = beta-alanine + CO2. Its pathway is cofactor biosynthesis; (R)-pantothenate biosynthesis; beta-alanine from L-aspartate: step 1/1. Catalyzes the pyruvoyl-dependent decarboxylation of aspartate to produce beta-alanine. This Stutzerimonas stutzeri (strain A1501) (Pseudomonas stutzeri) protein is Aspartate 1-decarboxylase.